Here is a 266-residue protein sequence, read N- to C-terminus: 4-hydroxy-tetrahydrodipicolinate reductase (266 aa).

NAD(+)-binding positions include 8-13 (GAAGRM) and Glu-33. Arg-34 is an NADP(+) binding site. NAD(+) contacts are provided by residues 97–99 (GST) and 121–124 (APNM). His-154 serves as the catalytic Proton donor/acceptor. Position 155 (His-155) interacts with (S)-2,3,4,5-tetrahydrodipicolinate. The Proton donor role is filled by Lys-158. 164–165 (GT) contacts (S)-2,3,4,5-tetrahydrodipicolinate.

This sequence belongs to the DapB family.

The protein resides in the cytoplasm. The catalysed reaction is (S)-2,3,4,5-tetrahydrodipicolinate + NAD(+) + H2O = (2S,4S)-4-hydroxy-2,3,4,5-tetrahydrodipicolinate + NADH + H(+). It catalyses the reaction (S)-2,3,4,5-tetrahydrodipicolinate + NADP(+) + H2O = (2S,4S)-4-hydroxy-2,3,4,5-tetrahydrodipicolinate + NADPH + H(+). The protein operates within amino-acid biosynthesis; L-lysine biosynthesis via DAP pathway; (S)-tetrahydrodipicolinate from L-aspartate: step 4/4. Functionally, catalyzes the conversion of 4-hydroxy-tetrahydrodipicolinate (HTPA) to tetrahydrodipicolinate. The chain is 4-hydroxy-tetrahydrodipicolinate reductase from Trichlorobacter lovleyi (strain ATCC BAA-1151 / DSM 17278 / SZ) (Geobacter lovleyi).